Reading from the N-terminus, the 296-residue chain is Farnesyl diphosphate synthase (296 aa).

Isopentenyl diphosphate contacts are provided by K46, R49, and H78. The Mg(2+) site is built by D85 and D91. R96 lines the (2E)-geranyl diphosphate pocket. Position 97 (R97) interacts with isopentenyl diphosphate. (2E)-geranyl diphosphate-binding residues include K182, T183, Q220, and K237.

The protein belongs to the FPP/GGPP synthase family. Mg(2+) serves as cofactor.

The protein localises to the cytoplasm. It carries out the reaction isopentenyl diphosphate + (2E)-geranyl diphosphate = (2E,6E)-farnesyl diphosphate + diphosphate. This is Farnesyl diphosphate synthase (ispA) from Bacillus subtilis (strain 168).